Consider the following 464-residue polypeptide: Glutamate--tRNA ligase (464 aa).

A 'HIGH' region motif is present at residues 11–21; sequence PSPTGYLHIGG. Residues 253 to 257 carry the 'KMSKS' region motif; the sequence is KLSKR. ATP is bound at residue Lys-256.

Belongs to the class-I aminoacyl-tRNA synthetase family. Glutamate--tRNA ligase type 1 subfamily. As to quaternary structure, monomer.

The protein localises to the cytoplasm. The enzyme catalyses tRNA(Glu) + L-glutamate + ATP = L-glutamyl-tRNA(Glu) + AMP + diphosphate. In terms of biological role, catalyzes the attachment of glutamate to tRNA(Glu) in a two-step reaction: glutamate is first activated by ATP to form Glu-AMP and then transferred to the acceptor end of tRNA(Glu). The polypeptide is Glutamate--tRNA ligase (Metamycoplasma arthritidis (strain 158L3-1) (Mycoplasma arthritidis)).